A 547-amino-acid chain; its full sequence is MAAKQIKFSDDARKRMARGVNVLADAVKVTLGPKGRNVVLEKSFGSPTVTKDGVSVAKEIELKDKFENMGAQMVKEVASKTSDVAGDGTTTATVLAQSIVTEGMKGVTAGMNPMDLKRGIDQAVDAAVKEIQSLSVPCTDAKAIAQVGTISANGDKRIGEIIADAMQKVGKEGVITVDEGRGFEDELEVVEGMQFDRGYLSPYFVTNQDTMMVELEDPYLLMVDKKISNIRELLPVLEAVAKSGKPLGIIAEDIEGEALATLVVNTMRGIVKAAATKAPGFGDRRKAMLQDIAILTGGTVISEEVGLTLEQANLDHLGSAKRVTMSKENTTIIDGAGVEADIEARVSQIRAQIEDTSSDYDREKLQERVAKLAGGVAVIRVGAATEFEMKEKKARVEDALHSTRAAVEEGVVPGGGTALVRILNKLVDLKGDNEDQTHGIAIALRAMEAPLRQIVTNAGQEASVIVNQVKAGEGNYGYNAQTGEYGDLFDMGVLDPAKVTRSALQSAGSVAGLMITTEAMIADDPDEKEAGGGAPDMGGMGGMGGMM.

Residues 30 to 33, lysine 51, 87 to 91, glycine 415, and aspartate 495 contribute to the ATP site; these read TLGP and DGTTT. The disordered stretch occupies residues 525–547; the sequence is PDEKEAGGGAPDMGGMGGMGGMM. The span at 531 to 547 shows a compositional bias: gly residues; the sequence is GGGAPDMGGMGGMGGMM.

This sequence belongs to the chaperonin (HSP60) family. Forms a cylinder of 14 subunits composed of two heptameric rings stacked back-to-back. Interacts with the co-chaperonin GroES.

Its subcellular location is the cytoplasm. It carries out the reaction ATP + H2O + a folded polypeptide = ADP + phosphate + an unfolded polypeptide.. In terms of biological role, together with its co-chaperonin GroES, plays an essential role in assisting protein folding. The GroEL-GroES system forms a nano-cage that allows encapsulation of the non-native substrate proteins and provides a physical environment optimized to promote and accelerate protein folding. The polypeptide is Chaperonin GroEL (Chromohalobacter salexigens (strain ATCC BAA-138 / DSM 3043 / CIP 106854 / NCIMB 13768 / 1H11)).